A 259-amino-acid chain; its full sequence is MLSKRIIPCLDVRDGRLTKGIKFQGNVDIGDPVESARRYYEQGADEIVFYDITASHEGRGIFLDIVEKVASSIFIPFSVGGGINTVDDMRDALNAGAEKVSVNSGAVKDPDIISKGAARFGSQAIVLGMDVKRVAPTEAIPSGYEIVIHGGRKHMGMDALDWAKTAEVLGAGEICVNSIDADGTKDGYELTLTRMISDAVQIPVIASGGAGHPAHMYDALTKGGASAALIASIVHYGEYTIPDLKKQIQAMGCKMRLTW.

Residues Asp-11 and Asp-130 contribute to the active site.

Belongs to the HisA/HisF family. In terms of assembly, heterodimer of HisH and HisF.

Its subcellular location is the cytoplasm. It catalyses the reaction 5-[(5-phospho-1-deoxy-D-ribulos-1-ylimino)methylamino]-1-(5-phospho-beta-D-ribosyl)imidazole-4-carboxamide + L-glutamine = D-erythro-1-(imidazol-4-yl)glycerol 3-phosphate + 5-amino-1-(5-phospho-beta-D-ribosyl)imidazole-4-carboxamide + L-glutamate + H(+). The protein operates within amino-acid biosynthesis; L-histidine biosynthesis; L-histidine from 5-phospho-alpha-D-ribose 1-diphosphate: step 5/9. In terms of biological role, IGPS catalyzes the conversion of PRFAR and glutamine to IGP, AICAR and glutamate. The HisF subunit catalyzes the cyclization activity that produces IGP and AICAR from PRFAR using the ammonia provided by the HisH subunit. This chain is Imidazole glycerol phosphate synthase subunit HisF, found in Oleidesulfovibrio alaskensis (strain ATCC BAA-1058 / DSM 17464 / G20) (Desulfovibrio alaskensis).